The sequence spans 454 residues: Chromosomal replication initiator protein DnaA (454 aa).

Residues Met1–Ala83 are domain I, interacts with DnaA modulators. Residues Ala83 to Ser113 are domain II. A domain III, AAA+ region region spans residues Asp114–Ala332. ATP-binding residues include Gly158, Gly160, Lys161, and Thr162. Residues Asn333–Lys454 form a domain IV, binds dsDNA region.

This sequence belongs to the DnaA family. In terms of assembly, oligomerizes as a right-handed, spiral filament on DNA at oriC.

It localises to the cytoplasm. In terms of biological role, plays an essential role in the initiation and regulation of chromosomal replication. ATP-DnaA binds to the origin of replication (oriC) to initiate formation of the DNA replication initiation complex once per cell cycle. Binds the DnaA box (a 9 base pair repeat at the origin) and separates the double-stranded (ds)DNA. Forms a right-handed helical filament on oriC DNA; dsDNA binds to the exterior of the filament while single-stranded (ss)DNA is stabiized in the filament's interior. The ATP-DnaA-oriC complex binds and stabilizes one strand of the AT-rich DNA unwinding element (DUE), permitting loading of DNA polymerase. After initiation quickly degrades to an ADP-DnaA complex that is not apt for DNA replication. Binds acidic phospholipids. This is Chromosomal replication initiator protein DnaA from Streptococcus thermophilus (strain ATCC BAA-250 / LMG 18311).